The primary structure comprises 425 residues: Protein let-756 (425 aa).

Disordered stretches follow at residues Leu277–Glu298 and Glu314–Pro425. Over residues Lys281–Arg291 the composition is skewed to basic residues. Polar residues predominate over residues Ala329–Asn340. Over residues His378–Arg389 the composition is skewed to basic residues. Over residues Asp395–Pro425 the composition is skewed to polar residues.

It belongs to the heparin-binding growth factors family. As to quaternary structure, interacts with pal-1. In terms of tissue distribution, expressed in pharynx, CAN neuron and body wall muscles.

It localises to the nucleus. Its subcellular location is the membrane. Functionally, required for larval development. Probably by binding receptor egl-15, negatively regulates membrane protrusion from body wall muscles during larval development. The polypeptide is Protein let-756 (let-756) (Caenorhabditis elegans).